We begin with the raw amino-acid sequence, 268 residues long: Protein MGF 300-1L (268 aa).

Over 1 to 175 the chain is Cytoplasmic; the sequence is MVSLTTCCLK…QTFKTFYAKN (175 aa). The helical transmembrane segment at 176–193 threads the bilayer; sequence YSLSTLYCIFLAIYYKLY. At 194-268 the chain is on the extracellular side; the sequence is TALRKMVKIY…MYAFSQNDYW (75 aa). Asn-227 carries N-linked (GlcNAc...) asparagine; by host glycosylation.

The protein belongs to the asfivirus MGF 300 family.

The protein resides in the host membrane. Functionally, plays a role in virus cell tropism, and may be required for efficient virus replication in macrophages. This is Protein MGF 300-1L from African swine fever virus (strain Badajoz 1971 Vero-adapted) (Ba71V).